The primary structure comprises 406 residues: Argininosuccinate synthase (406 aa).

ATP-binding positions include 13 to 21 (AYSGGLDTS) and alanine 40. Positions 91 and 96 each coordinate L-citrulline. Glycine 121 is an ATP binding site. Residues threonine 123, asparagine 127, and aspartate 128 each contribute to the L-aspartate site. Asparagine 127 is an L-citrulline binding site. The L-citrulline site is built by arginine 131, serine 182, serine 191, glutamate 267, and tyrosine 279.

This sequence belongs to the argininosuccinate synthase family. Type 1 subfamily. As to quaternary structure, homotetramer.

The protein localises to the cytoplasm. It catalyses the reaction L-citrulline + L-aspartate + ATP = 2-(N(omega)-L-arginino)succinate + AMP + diphosphate + H(+). It functions in the pathway amino-acid biosynthesis; L-arginine biosynthesis; L-arginine from L-ornithine and carbamoyl phosphate: step 2/3. The sequence is that of Argininosuccinate synthase from Brucella anthropi (strain ATCC 49188 / DSM 6882 / CCUG 24695 / JCM 21032 / LMG 3331 / NBRC 15819 / NCTC 12168 / Alc 37) (Ochrobactrum anthropi).